A 365-amino-acid chain; its full sequence is uncharacterized protein (365 aa).

Disordered regions lie at residues 218–262 (QRPS…AEAA) and 315–342 (PRLPEPPVPPDGSGSRMEFRNLSDRTPC). Basic and acidic residues-rich tracts occupy residues 239–257 (PDNRVQEHREELSQTKDPE) and 331–341 (MEFRNLSDRTP).

This is an uncharacterized protein from Mus musculus (Mouse).